A 157-amino-acid polypeptide reads, in one-letter code: 2-amino-4-hydroxy-6-hydroxymethyldihydropteridine pyrophosphokinase (157 aa).

It belongs to the HPPK family.

It carries out the reaction 6-hydroxymethyl-7,8-dihydropterin + ATP = (7,8-dihydropterin-6-yl)methyl diphosphate + AMP + H(+). It participates in cofactor biosynthesis; tetrahydrofolate biosynthesis; 2-amino-4-hydroxy-6-hydroxymethyl-7,8-dihydropteridine diphosphate from 7,8-dihydroneopterin triphosphate: step 4/4. Catalyzes the transfer of pyrophosphate from adenosine triphosphate (ATP) to 6-hydroxymethyl-7,8-dihydropterin, an enzymatic step in folate biosynthesis pathway. The sequence is that of 2-amino-4-hydroxy-6-hydroxymethyldihydropteridine pyrophosphokinase (folK) from Campylobacter jejuni subsp. jejuni serotype O:2 (strain ATCC 700819 / NCTC 11168).